The following is a 445-amino-acid chain: Xylose isomerase (445 aa).

Active-site residues include histidine 107 and aspartate 110. The Mg(2+) site is built by glutamate 238, glutamate 274, histidine 277, aspartate 302, aspartate 313, aspartate 315, and aspartate 345.

The protein belongs to the xylose isomerase family. Homotetramer. Mg(2+) is required as a cofactor.

It is found in the cytoplasm. It carries out the reaction alpha-D-xylose = alpha-D-xylulofuranose. This chain is Xylose isomerase, found in Bacillus cereus (strain ATCC 10987 / NRS 248).